Consider the following 115-residue polypeptide: Cholecystokinin (115 aa).

An N-terminal signal peptide occupies residues 1–20 (MKSGVCLCVVMAVLAAGALA). Residues 21 to 70 (QPVVPAEATDPVEQRAQEAPRRQLRAVLRTDGEPRARLGALLARYIQQVR) constitute a propeptide that is removed on maturation. Y97 carries the post-translational modification Sulfotyrosine. F103 carries the phenylalanine amide modification. The propeptide occupies 107–115 (SAEDYEYPS). Y111 and Y113 each carry sulfotyrosine.

The protein belongs to the gastrin/cholecystokinin family. Binds to CCK-A receptors in the pancreas and CCK-B receptors in the brain. In terms of processing, the precursor is cleaved by proteases to produce a number of active cholecystokinins. Expressed and secreted by discrete enteroendocrine cells that reside as single cells scattered among enterocytes in the mucosa of the small intestine. Released into the blood following ingestion of a meal.

Its subcellular location is the secreted. In terms of biological role, this peptide hormone induces gall bladder contraction and the release of pancreatic enzymes in the gut. Its function in the brain is not clear. Binding to CCK-A receptors stimulates amylase release from the pancreas, binding to CCK-B receptors stimulates gastric acid secretion. The polypeptide is Cholecystokinin (Cck) (Mus musculus (Mouse)).